The chain runs to 171 residues: uncharacterized protein (171 aa).

Disordered stretches follow at residues 68 to 124 (NKNN…ASQQ) and 140 to 171 (GDED…SIKN). Residues 141-160 (DEDKGMDSTLKLPERTKRDS) are compositionally biased toward basic and acidic residues.

This sequence belongs to the asfivirus H171R family.

The protein resides in the virion. This is an uncharacterized protein from Ornithodoros (relapsing fever ticks).